Consider the following 634-residue polypeptide: Chaperone protein HtpG (634 aa).

The interval 1–344 is a; substrate-binding; that stretch reads MSETVSQNKE…SNDLPLNVSR (344 aa). The b stretch occupies residues 345–561; the sequence is EILQDNKVTQ…DYEMGTQMAK (217 aa). Residues 562–634 form a c region; it reads LLAAAGQAVP…GAINKLLTKV (73 aa).

Belongs to the heat shock protein 90 family. As to quaternary structure, homodimer.

The protein resides in the cytoplasm. Molecular chaperone. Has ATPase activity. This chain is Chaperone protein HtpG, found in Vibrio parahaemolyticus serotype O3:K6 (strain RIMD 2210633).